The following is a 108-amino-acid chain: UPF0235 protein MM_0822 (108 aa).

This sequence belongs to the UPF0235 family.

This chain is UPF0235 protein MM_0822, found in Methanosarcina mazei (strain ATCC BAA-159 / DSM 3647 / Goe1 / Go1 / JCM 11833 / OCM 88) (Methanosarcina frisia).